A 207-amino-acid chain; its full sequence is Outer-membrane lipoprotein LolB (207 aa).

An N-terminal signal peptide occupies residues 1–21; the sequence is MPLPDFRLIRLLPLAALVLTA. Residue C22 is the site of N-palmitoyl cysteine attachment. A lipid anchor (S-diacylglycerol cysteine) is attached at C22.

This sequence belongs to the LolB family. Monomer.

It is found in the cell outer membrane. Its function is as follows. Plays a critical role in the incorporation of lipoproteins in the outer membrane after they are released by the LolA protein. In Shigella dysenteriae serotype 1 (strain Sd197), this protein is Outer-membrane lipoprotein LolB.